The primary structure comprises 257 residues: Achaete-scute complex protein T3 (257 aa).

In terms of domain architecture, bHLH spans 83–145; that stretch reads PSVARRNARE…RIAVEYIRGL (63 aa). The interval 161–221 is disordered; it reads YNSADESSND…SEISGGGYIK (61 aa). Low complexity-rich tracts occupy residues 165–184 and 193–213; these read DESSNDGSSYNDYNDSLDSS and QSAQSHSYHSASPTPSYSGSE.

Efficient DNA binding requires dimerization with another bHLH protein. L(1)SC, SC and AC strongly label the presumptive stomatogastric nervous system, while ASE is more prominent in the presumptive procephalic lobe.

In terms of biological role, AS-C proteins are involved in the determination of the neuronal precursors in the peripheral nervous system and the central nervous system. This chain is Achaete-scute complex protein T3 (l(1)sc), found in Drosophila melanogaster (Fruit fly).